A 213-amino-acid polypeptide reads, in one-letter code: Ribosomal RNA small subunit methyltransferase G (213 aa).

Residues G77, F82, 130-131 (IE), and R146 contribute to the S-adenosyl-L-methionine site.

Belongs to the methyltransferase superfamily. RNA methyltransferase RsmG family.

The protein resides in the cytoplasm. The enzyme catalyses guanosine(527) in 16S rRNA + S-adenosyl-L-methionine = N(7)-methylguanosine(527) in 16S rRNA + S-adenosyl-L-homocysteine. Specifically methylates the N7 position of guanine in position 527 of 16S rRNA. In Bartonella tribocorum (strain CIP 105476 / IBS 506), this protein is Ribosomal RNA small subunit methyltransferase G.